The chain runs to 228 residues: Trichome differentiation protein GL1 (228 aa).

2 consecutive HTH myb-type domains span residues asparagine 11–leucine 63 and serine 64–leucine 118. 2 consecutive DNA-binding regions (H-T-H motif) follow at residues tryptophan 39–leucine 63 and tryptophan 91–leucine 114.

In terms of assembly, homodimer and heterodimer with MYB82. Interacts directly with GL3 and BHLH2. Part of a complex made of GL1, GL3 or BHLH2, and TTG1. Also interacts with BHLH2/EGL3/MYC146 and BHLH12/MYC1. Interacts with MYB82. In terms of tissue distribution, expressed in leaves, stems and flowers. Expressed in trichome cells and in leaf primordia.

The protein resides in the nucleus. Functionally, transcription activator, when associated with BHLH2/EGL3/MYC146 or BHLH12/MYC1. Involved in epidermal cell fate specification in leaves. Together with TTG1 and GL3, promotes trichome formation and endoreplication. Regulates the production of a signal that induces hair (trichome) precursor cells on leaf primordia to differentiate. Binds to the WER-binding sites (WBS) promoter regions and activates the transcription of target genes. This Arabidopsis thaliana (Mouse-ear cress) protein is Trichome differentiation protein GL1.